A 353-amino-acid chain; its full sequence is Histidine biosynthesis bifunctional protein HisB (353 aa).

The tract at residues 1-164 (MKNKILFIDR…HITKYIIKHN (164 aa)) is histidinol-phosphatase. Asp-9 serves as the catalytic Nucleophile. Mg(2+) is bound by residues Asp-9 and Asp-11. Asp-11 acts as the Proton donor in catalysis. Positions 93, 95, 101, and 103 each coordinate Zn(2+). Position 128 (Asp-128) interacts with Mg(2+). Residues 165 to 353 (RYAEIIRRTK…NMLPTSKGIL (189 aa)) are imidazoleglycerol-phosphate dehydratase.

In the N-terminal section; belongs to the histidinol-phosphatase family. This sequence in the C-terminal section; belongs to the imidazoleglycerol-phosphate dehydratase family. The cofactor is Mg(2+). Requires Zn(2+) as cofactor.

Its subcellular location is the cytoplasm. The enzyme catalyses D-erythro-1-(imidazol-4-yl)glycerol 3-phosphate = 3-(imidazol-4-yl)-2-oxopropyl phosphate + H2O. It carries out the reaction L-histidinol phosphate + H2O = L-histidinol + phosphate. Its pathway is amino-acid biosynthesis; L-histidine biosynthesis; L-histidine from 5-phospho-alpha-D-ribose 1-diphosphate: step 6/9. It participates in amino-acid biosynthesis; L-histidine biosynthesis; L-histidine from 5-phospho-alpha-D-ribose 1-diphosphate: step 8/9. The polypeptide is Histidine biosynthesis bifunctional protein HisB (Buchnera aphidicola subsp. Acyrthosiphon pisum (strain Tuc7)).